The chain runs to 568 residues: 2-succinyl-5-enolpyruvyl-6-hydroxy-3-cyclohexene-1-carboxylate synthase (568 aa).

The protein belongs to the TPP enzyme family. MenD subfamily. Homodimer. Mg(2+) is required as a cofactor. It depends on Mn(2+) as a cofactor. The cofactor is thiamine diphosphate.

The catalysed reaction is isochorismate + 2-oxoglutarate + H(+) = 5-enolpyruvoyl-6-hydroxy-2-succinyl-cyclohex-3-ene-1-carboxylate + CO2. The protein operates within quinol/quinone metabolism; 1,4-dihydroxy-2-naphthoate biosynthesis; 1,4-dihydroxy-2-naphthoate from chorismate: step 2/7. Its pathway is quinol/quinone metabolism; menaquinone biosynthesis. Functionally, catalyzes the thiamine diphosphate-dependent decarboxylation of 2-oxoglutarate and the subsequent addition of the resulting succinic semialdehyde-thiamine pyrophosphate anion to isochorismate to yield 2-succinyl-5-enolpyruvyl-6-hydroxy-3-cyclohexene-1-carboxylate (SEPHCHC). The polypeptide is 2-succinyl-5-enolpyruvyl-6-hydroxy-3-cyclohexene-1-carboxylate synthase (Actinobacillus pleuropneumoniae serotype 7 (strain AP76)).